The following is a 411-amino-acid chain: Putative ion-transport protein YfeO (411 aa).

11 helical membrane passes run Met-9–Ala-29, Asp-54–Ile-74, Ala-99–Pro-119, Ile-149–Ile-169, Leu-186–Pro-206, Ile-223–Cys-243, Val-258–Leu-278, Leu-296–Ala-316, Gly-322–His-342, Val-343–Val-363, and Leu-386–Ala-406.

Belongs to the chloride channel (TC 2.A.49) family.

The protein localises to the cell membrane. The polypeptide is Putative ion-transport protein YfeO (Salmonella schwarzengrund (strain CVM19633)).